A 364-amino-acid polypeptide reads, in one-letter code: Dual-specificity RNA methyltransferase RlmN (364 aa).

Glu91 (proton acceptor) is an active-site residue. Residues 97–333 (ESDRGTLCIS…VTVRKTRGDD (237 aa)) form the Radical SAM core domain. Cys104 and Cys338 form a disulfide bridge. [4Fe-4S] cluster-binding residues include Cys111, Cys115, and Cys118. Residues 164–165 (GE), Ser196, 218–220 (SLH), and Asn295 contribute to the S-adenosyl-L-methionine site. The active-site S-methylcysteine intermediate is Cys338.

The protein belongs to the radical SAM superfamily. RlmN family. It depends on [4Fe-4S] cluster as a cofactor.

It is found in the cytoplasm. It carries out the reaction adenosine(2503) in 23S rRNA + 2 reduced [2Fe-2S]-[ferredoxin] + 2 S-adenosyl-L-methionine = 2-methyladenosine(2503) in 23S rRNA + 5'-deoxyadenosine + L-methionine + 2 oxidized [2Fe-2S]-[ferredoxin] + S-adenosyl-L-homocysteine. The catalysed reaction is adenosine(37) in tRNA + 2 reduced [2Fe-2S]-[ferredoxin] + 2 S-adenosyl-L-methionine = 2-methyladenosine(37) in tRNA + 5'-deoxyadenosine + L-methionine + 2 oxidized [2Fe-2S]-[ferredoxin] + S-adenosyl-L-homocysteine. Its function is as follows. Specifically methylates position 2 of adenine 2503 in 23S rRNA and position 2 of adenine 37 in tRNAs. m2A2503 modification seems to play a crucial role in the proofreading step occurring at the peptidyl transferase center and thus would serve to optimize ribosomal fidelity. The polypeptide is Dual-specificity RNA methyltransferase RlmN (Neisseria meningitidis serogroup A / serotype 4A (strain DSM 15465 / Z2491)).